We begin with the raw amino-acid sequence, 126 residues long: Protein ApaG (126 aa).

The ApaG domain occupies 2 to 126; the sequence is SDPRYQVDVS…FRLAVPGALH (125 aa).

This chain is Protein ApaG, found in Pseudomonas fluorescens (strain Pf0-1).